The chain runs to 454 residues: Bleomycin hydrolase (454 aa).

Met-1 is subject to N-acetylmethionine. Residues Cys-73 and His-372 contribute to the active site. At Lys-391 the chain carries N6-acetyllysine. Asn-396 is a catalytic residue.

The protein belongs to the peptidase C1 family. Homohexamer. Interacts with NUDT12 (via ANK repeats). In terms of tissue distribution, expressed at relatively higher levels in the stomach, esophagus, spleen, thymus and testis, and at lower levels in the skin, lung and skeletal muscle.

The protein resides in the cytoplasm. It is found in the cytoplasmic granule. It catalyses the reaction Inactivates bleomycin B2 (a cytotoxic glycometallopeptide) by hydrolysis of a carboxyamide bond of beta-aminoalanine, but also shows general aminopeptidase activity. The specificity varies somewhat with source, but amino acid arylamides of Met, Leu and Ala are preferred.. In terms of biological role, the normal physiological role of BLM hydrolase is unknown, but it catalyzes the inactivation of the antitumor drug BLM (a glycopeptide) by hydrolyzing the carboxamide bond of its B-aminoalaninamide moiety thus protecting normal and malignant cells from BLM toxicity. Binds single-stranded DNA with higher affinity than double-stranded DNA. May play an important role in the metabolism of antibiotics. The chain is Bleomycin hydrolase (Blmh) from Rattus norvegicus (Rat).